Here is a 564-residue protein sequence, read N- to C-terminus: Sphingomyelin phosphodiesterase 1 (564 aa).

The N-terminal stretch at 1–17 is a signal peptide; it reads MRIIYLISTVLLIYTNA. A Saposin B-type domain is found at 37–121; it reads FQPLCISCTG…IILPDCADPT (85 aa). 3 cysteine pairs are disulfide-bonded: Cys41–Cys117, Cys44–Cys110, and Cys72–Cys83. An N-linked (GlcNAc...) asparagine glycan is attached at Asn151. The Zn(2+) site is built by Asp165 and His167. 2 disulfide bridges follow: Cys180–Cys185 and Cys186–Cys206. N-linked (GlcNAc...) asparagine glycosylation is present at Asn221. 2 residues coordinate Zn(2+): Asp234 and Asn274. The cysteines at positions 341 and 389 are disulfide-linked. Residue Asn351 is glycosylated (N-linked (GlcNAc...) asparagine). His381, His415, and His417 together coordinate Zn(2+). Asn430 carries an N-linked (GlcNAc...) asparagine glycan. Intrachain disulfides connect Cys538–Cys542 and Cys548–Cys561. Asn556 carries N-linked (GlcNAc...) asparagine glycosylation.

It belongs to the acid sphingomyelinase family. Requires Zn(2+) as cofactor.

It localises to the secreted. The enzyme catalyses a sphingomyelin + H2O = phosphocholine + an N-acylsphing-4-enine + H(+). It carries out the reaction an N-acyl-15-methylhexadecasphing-4-enine-1-phosphocholine + H2O = an N-acyl-15-methylhexadecasphing-4-enine + phosphocholine + H(+). It participates in lipid metabolism; sphingolipid metabolism. Its function is as follows. Sphingomyelin phosphodiesterase (sphingomyelinase) that converts sphingomyelin to ceramide (N-acyl-sphingoid base) and phosphocholine at acidic pH. Displays its enzymatic activity when secreted. May play distinct roles in signaling. This is Sphingomyelin phosphodiesterase 1 (asm-1) from Caenorhabditis elegans.